A 147-amino-acid polypeptide reads, in one-letter code: Small ribosomal subunit protein bS6m (147 aa).

It belongs to the bacterial ribosomal protein bS6 family. As to quaternary structure, component of the mitochondrial ribosome small subunit (28S) which comprises a 12S rRNA and about 30 distinct proteins.

It localises to the mitochondrion. The polypeptide is Small ribosomal subunit protein bS6m (mRpS6) (Drosophila melanogaster (Fruit fly)).